A 251-amino-acid chain; its full sequence is 5-oxoprolinase subunit A (251 aa).

This sequence belongs to the LamB/PxpA family. As to quaternary structure, forms a complex composed of PxpA, PxpB and PxpC.

The enzyme catalyses 5-oxo-L-proline + ATP + 2 H2O = L-glutamate + ADP + phosphate + H(+). Catalyzes the cleavage of 5-oxoproline to form L-glutamate coupled to the hydrolysis of ATP to ADP and inorganic phosphate. The chain is 5-oxoprolinase subunit A from Tolumonas auensis (strain DSM 9187 / NBRC 110442 / TA 4).